Consider the following 848-residue polypeptide: Protein SEY1 (848 aa).

The Cytoplasmic portion of the chain corresponds to 1–733 (MNGNFAAVGS…KRGALGGMTQ (733 aa)). The 231-residue stretch at 47-277 (GFNYHLISVF…FVGGVFLPEY (231 aa)) folds into the GB1/RHD3-type G domain. 57–64 (GSQSTGKS) contacts GTP. The chain crosses the membrane as a helical span at residues 734 to 754 (VPLYFWIALFAFGWNEIWMVI). Residues 755 to 757 (RNP) are Lumenal-facing. A helical membrane pass occupies residues 758–778 (FLFILLLLSAGGTYVAYNLSL). Residues 779 to 848 (LGPMMQMTNA…KKKDYDDDGI (70 aa)) are Cytoplasmic-facing. Positions 815 to 848 (LAMPASSKSSGGEQVRMDTLDSKGKKKDYDDDGI) are disordered. Basic and acidic residues predominate over residues 829 to 848 (VRMDTLDSKGKKKDYDDDGI).

It belongs to the TRAFAC class dynamin-like GTPase superfamily. GB1/RHD3 GTPase family. RHD3 subfamily.

It localises to the endoplasmic reticulum membrane. In terms of biological role, cooperates with the reticulon proteins and tubule-shaping DP1 family proteins to generate and maintain the structure of the tubular endoplasmic reticulum network. Has GTPase activity, which is required for its function in ER organization. The protein is Protein SEY1 of Pyricularia oryzae (strain 70-15 / ATCC MYA-4617 / FGSC 8958) (Rice blast fungus).